A 147-amino-acid polypeptide reads, in one-letter code: Hemoglobin subunit epsilon (147 aa).

Positions 3–147 (HFTAEEKAAV…VAIALAHKYH (145 aa)) constitute a Globin domain. A phosphoserine mark is found at serine 14 and serine 51. Heme b is bound by residues histidine 64 and histidine 93.

Belongs to the globin family. As to quaternary structure, heterotetramer of two alpha chains and two epsilon chains in early embryonic hemoglobin Gower-2; two zeta chains and two epsilon chains in early embryonic hemoglobin Gower-1. As to expression, red blood cells.

Its function is as follows. The epsilon chain is a beta-type chain of early mammalian embryonic hemoglobin. This Pan paniscus (Pygmy chimpanzee) protein is Hemoglobin subunit epsilon (HBE1).